The chain runs to 334 residues: Fructose-1,6-bisphosphatase class 1 (334 aa).

Mg(2+) contacts are provided by Glu-90, Asp-113, Leu-115, and Asp-116. Substrate is bound by residues 116–119, Asn-209, Tyr-242, and Lys-272; that span reads DGSS. Residue Glu-278 participates in Mg(2+) binding.

This sequence belongs to the FBPase class 1 family. Homotetramer. Mg(2+) serves as cofactor.

It localises to the cytoplasm. It catalyses the reaction beta-D-fructose 1,6-bisphosphate + H2O = beta-D-fructose 6-phosphate + phosphate. Its pathway is carbohydrate biosynthesis; gluconeogenesis. The protein is Fructose-1,6-bisphosphatase class 1 of Actinobacillus pleuropneumoniae serotype 7 (strain AP76).